The primary structure comprises 308 residues: tRNA pseudouridine synthase B (308 aa).

The active-site Nucleophile is the D47.

It belongs to the pseudouridine synthase TruB family. Type 1 subfamily.

It catalyses the reaction uridine(55) in tRNA = pseudouridine(55) in tRNA. Functionally, responsible for synthesis of pseudouridine from uracil-55 in the psi GC loop of transfer RNAs. This is tRNA pseudouridine synthase B from Xanthomonas oryzae pv. oryzae (strain MAFF 311018).